The following is a 622-amino-acid chain: Threonine--tRNA ligase (622 aa).

The interval 1–136 (MKTLLIHSDY…PLSELSRKIT (136 aa)) is editing domain. The interval 199 to 498 (PHVKYIKEKE…TLENKPPALP (300 aa)) is catalytic. C291, H343, and H467 together coordinate Zn(2+).

This sequence belongs to the class-II aminoacyl-tRNA synthetase family. As to quaternary structure, homodimer. It depends on Zn(2+) as a cofactor.

Its subcellular location is the cytoplasm. The catalysed reaction is tRNA(Thr) + L-threonine + ATP = L-threonyl-tRNA(Thr) + AMP + diphosphate + H(+). Functionally, catalyzes the attachment of threonine to tRNA(Thr) in a two-step reaction: L-threonine is first activated by ATP to form Thr-AMP and then transferred to the acceptor end of tRNA(Thr). Also edits incorrectly charged L-seryl-tRNA(Thr). This chain is Threonine--tRNA ligase, found in Methanococcus maripaludis (strain DSM 14266 / JCM 13030 / NBRC 101832 / S2 / LL).